A 468-amino-acid chain; its full sequence is UDP-N-acetylmuramoyl-L-alanine--L-glutamate ligase (468 aa).

122–128 contacts ATP; sequence GTKGKST.

It belongs to the MurCDEF family. MurD2 subfamily.

It is found in the cytoplasm. It catalyses the reaction UDP-N-acetyl-alpha-D-muramoyl-L-alanine + L-glutamate + ATP = UDP-N-acetyl-alpha-D-muramoyl-L-alanyl-L-glutamate + ADP + phosphate + H(+). It functions in the pathway cell wall biogenesis; peptidoglycan biosynthesis. In terms of biological role, cell wall formation. Catalyzes the addition of L-glutamate to the nucleotide precursor UDP-N-acetylmuramoyl-L-alanine. This Xylella fastidiosa (strain Temecula1 / ATCC 700964) protein is UDP-N-acetylmuramoyl-L-alanine--L-glutamate ligase.